We begin with the raw amino-acid sequence, 460 residues long: Bifunctional protein GlmU (460 aa).

Residues 1-232 (MAISAALILA…PDEIMGVNDR (232 aa)) form a pyrophosphorylase region. UDP-N-acetyl-alpha-D-glucosamine-binding positions include 9-12 (LAAG), lysine 23, glutamine 75, and 80-81 (GT). Residue aspartate 105 coordinates Mg(2+). Residues glycine 142, glutamate 157, asparagine 172, and asparagine 230 each contribute to the UDP-N-acetyl-alpha-D-glucosamine site. Asparagine 230 is a Mg(2+) binding site. The linker stretch occupies residues 233 to 253 (VQLAHAARVLRQRVNLQLMLA). The interval 254-460 (GVTLIDPDQT…GWCLKKRDNG (207 aa)) is N-acetyltransferase. Residues arginine 336 and lysine 354 each coordinate UDP-N-acetyl-alpha-D-glucosamine. Histidine 366 serves as the catalytic Proton acceptor. UDP-N-acetyl-alpha-D-glucosamine is bound by residues tyrosine 369 and asparagine 380. Acetyl-CoA contacts are provided by residues 389–390 (NY), serine 408, alanine 426, and arginine 443.

The protein in the N-terminal section; belongs to the N-acetylglucosamine-1-phosphate uridyltransferase family. In the C-terminal section; belongs to the transferase hexapeptide repeat family. In terms of assembly, homotrimer. It depends on Mg(2+) as a cofactor.

The protein resides in the cytoplasm. The catalysed reaction is alpha-D-glucosamine 1-phosphate + acetyl-CoA = N-acetyl-alpha-D-glucosamine 1-phosphate + CoA + H(+). It carries out the reaction N-acetyl-alpha-D-glucosamine 1-phosphate + UTP + H(+) = UDP-N-acetyl-alpha-D-glucosamine + diphosphate. The protein operates within nucleotide-sugar biosynthesis; UDP-N-acetyl-alpha-D-glucosamine biosynthesis; N-acetyl-alpha-D-glucosamine 1-phosphate from alpha-D-glucosamine 6-phosphate (route II): step 2/2. It functions in the pathway nucleotide-sugar biosynthesis; UDP-N-acetyl-alpha-D-glucosamine biosynthesis; UDP-N-acetyl-alpha-D-glucosamine from N-acetyl-alpha-D-glucosamine 1-phosphate: step 1/1. Its pathway is bacterial outer membrane biogenesis; LPS lipid A biosynthesis. Functionally, catalyzes the last two sequential reactions in the de novo biosynthetic pathway for UDP-N-acetylglucosamine (UDP-GlcNAc). The C-terminal domain catalyzes the transfer of acetyl group from acetyl coenzyme A to glucosamine-1-phosphate (GlcN-1-P) to produce N-acetylglucosamine-1-phosphate (GlcNAc-1-P), which is converted into UDP-GlcNAc by the transfer of uridine 5-monophosphate (from uridine 5-triphosphate), a reaction catalyzed by the N-terminal domain. This is Bifunctional protein GlmU from Trichlorobacter lovleyi (strain ATCC BAA-1151 / DSM 17278 / SZ) (Geobacter lovleyi).